The following is a 282-amino-acid chain: Putative 23S rRNA (guanine-N(1)-)-methyltransferase YxjB (282 aa).

Zn(2+)-binding residues include Cys-12, Cys-15, Cys-29, and His-34. 103-104 (EG) is an S-adenosyl-L-methionine binding site.

It belongs to the methyltransferase superfamily. RlmA family.

The sequence is that of Putative 23S rRNA (guanine-N(1)-)-methyltransferase YxjB (yxjB) from Bacillus subtilis (strain 168).